The primary structure comprises 206 residues: High frequency lysogenization protein HflD homolog (206 aa).

This sequence belongs to the HflD family.

It is found in the cytoplasm. The protein localises to the cell inner membrane. The polypeptide is High frequency lysogenization protein HflD homolog (Pseudomonas paraeruginosa (strain DSM 24068 / PA7) (Pseudomonas aeruginosa (strain PA7))).